The sequence spans 95 residues: uncharacterized protein (95 aa).

Residues 1–64 form a disordered region; the sequence is MEIDDIFASK…PKGASGRKRT (64 aa). The segment covering 18–28 has biased composition (basic and acidic residues); sequence KSNDSKSEAKA. Residues 35–49 are compositionally biased toward polar residues; the sequence is TKSTPSRPKPTNNQD.

This is an uncharacterized protein from Schizosaccharomyces pombe (strain 972 / ATCC 24843) (Fission yeast).